The sequence spans 657 residues: Matrix metalloproteinase-15 (657 aa).

The N-terminal stretch at 1-36 (MGSDRSALGRPGCTGSCLSSRASLLPLLLVLLDCLG) is a signal peptide. The propeptide occupies 37–127 (HGTASKDAEV…KANLRRRRKR (91 aa)). Positions 105–112 (PRCGVPDQ) match the Cysteine switch motif. Residue Cys107 participates in Zn(2+) binding. The Extracellular segment spans residues 128–614 (YTLTGKAWNN…MEEVVRTVNV (487 aa)). A glycan (N-linked (GlcNAc...) asparagine) is linked at Asn146. Position 255 (His255) interacts with Zn(2+). The active site involves Glu256. Residues His259 and His265 each coordinate Zn(2+). The interval 295-365 (IQQLYGSPDG…ERPDQYGPNI (71 aa)) is disordered. Positions 328 to 337 (PRPPQPPHPG) are enriched in pro residues. Hemopexin repeat units lie at residues 363 to 411 (PNIC…WRGL), 412 to 457 (PGNI…GTDI), 459 to 507 (YDRI…QGIP), and 508 to 555 (TSPK…FMGC). An intrachain disulfide couples Cys366 to Cys555. Asn414 is a glycosylation site (N-linked (GlcNAc...) asparagine). Residues 561–599 (PRSRWPDVARPPFNPNGGAEPEADGDSKEENAGDKDEGS) are disordered. The span at 585-599 (GDSKEENAGDKDEGS) shows a compositional bias: basic and acidic residues. A helical membrane pass occupies residues 615–635 (VMVLVPLLLLLCILGLAFALV). Topologically, residues 636 to 657 (QMQRKGAPRMLLYCKRSLQEWV) are cytoplasmic.

This sequence belongs to the peptidase M10A family. The cofactor is Zn(2+). Ca(2+) serves as cofactor. The precursor is cleaved by a furin endopeptidase.

It localises to the membrane. Its function is as follows. Endopeptidase that degrades various components of the extracellular matrix. May activate progelatinase A. This Mus musculus (Mouse) protein is Matrix metalloproteinase-15 (Mmp15).